The following is a 499-amino-acid chain: Glycerol kinase (499 aa).

Threonine 11 lines the ADP pocket. ATP-binding residues include threonine 11, serine 12, and serine 13. Threonine 11 serves as a coordination point for sn-glycerol 3-phosphate. An ADP-binding site is contributed by arginine 15. Arginine 81, glutamate 82, tyrosine 133, and aspartate 242 together coordinate sn-glycerol 3-phosphate. Positions 81, 82, 133, 242, and 243 each coordinate glycerol. 2 residues coordinate ADP: threonine 264 and glycine 309. ATP is bound by residues threonine 264, glycine 309, glutamine 313, and glycine 414. The ADP site is built by glycine 414 and asparagine 418.

It belongs to the FGGY kinase family.

It catalyses the reaction glycerol + ATP = sn-glycerol 3-phosphate + ADP + H(+). Its pathway is polyol metabolism; glycerol degradation via glycerol kinase pathway; sn-glycerol 3-phosphate from glycerol: step 1/1. Inhibited by fructose 1,6-bisphosphate (FBP). In terms of biological role, key enzyme in the regulation of glycerol uptake and metabolism. Catalyzes the phosphorylation of glycerol to yield sn-glycerol 3-phosphate. This Methylibium petroleiphilum (strain ATCC BAA-1232 / LMG 22953 / PM1) protein is Glycerol kinase.